The primary structure comprises 558 residues: WW domain-containing adapter protein with coiled-coil (558 aa).

3 disordered regions span residues 1 to 129 (MVMY…WSEH), 159 to 244 (QRQK…SPAP), and 321 to 461 (VAQQ…APGR). Polar residues predominate over residues 22–32 (QPYQTLKYSSK). 2 stretches are compositionally biased toward basic and acidic residues: residues 33-46 (SHPD…RDSN) and 56-70 (RRSD…DNTG). A compositionally biased stretch (basic residues) spans 72–82 (GRAKAIHPHRG). Residues 99-116 (NHSSLHSSNSHSNPNKSS) are compositionally biased toward low complexity. Residues 120–153 (FEPADDWSEHISSSGKKYYYNCRTEVSQWEKPKE) enclose the WW domain. The span at 175–184 (PKDRDYRREA) shows a compositional bias: basic and acidic residues. Over residues 188 to 200 (TPASYSSTKSSIA) the composition is skewed to polar residues. Residues 204-217 (PSSLTPSSSSAAVS) show a composition bias toward low complexity. 2 stretches are compositionally biased toward polar residues: residues 223 to 234 (NSASSASGSTVP) and 321 to 378 (VAQQ…MTVK). Residues 402–431 (SPRTLQRQSSQRSPSPGPNHMGSNSSSSSN) show a composition bias toward low complexity. Residues 432 to 443 (NGGGGGGQGPGV) show a composition bias toward gly residues. Residues 529-555 (QATLREQRILFLRQQIKELEKLKNQNS) are a coiled coil.

It localises to the nucleus. Functionally, acts as a linker between gene transcription and histone H2B monoubiquitination at 'Lys-120' (H2BK120ub1). Positive regulator of amino acid starvation-induced autophagy. Positively regulates MTOR activity. May negatively regulate the ubiquitin proteasome pathway. The chain is WW domain-containing adapter protein with coiled-coil (waca) from Danio rerio (Zebrafish).